A 310-amino-acid polypeptide reads, in one-letter code: tRNA uridine(34) hydroxylase (310 aa).

The region spanning 127 to 225 (KDKNTIVVDT…YLEDMSKEES (99 aa)) is the Rhodanese domain. Catalysis depends on cysteine 185, which acts as the Cysteine persulfide intermediate.

The protein belongs to the TrhO family.

It catalyses the reaction uridine(34) in tRNA + AH2 + O2 = 5-hydroxyuridine(34) in tRNA + A + H2O. Functionally, catalyzes oxygen-dependent 5-hydroxyuridine (ho5U) modification at position 34 in tRNAs. The chain is tRNA uridine(34) hydroxylase from Prochlorococcus marinus subsp. pastoris (strain CCMP1986 / NIES-2087 / MED4).